The sequence spans 131 residues: Anaerobic and virulence modulator AnvM (131 aa).

In terms of biological role, plays an essential role by modulating the expression of hundreds of genes including quorum sensing system genes and oxidative stress resistance genes under both aerobic and anaerobic conditions. This is Anaerobic and virulence modulator AnvM from Pseudomonas aeruginosa (strain ATCC 15692 / DSM 22644 / CIP 104116 / JCM 14847 / LMG 12228 / 1C / PRS 101 / PAO1).